The sequence spans 487 residues: DNA ligase (487 aa).

The active-site N6-AMP-lysine intermediate is lysine 159. ATP is bound by residues arginine 164, arginine 182, and glutamate 217. Glutamate 217 contacts a divalent metal cation. Residues 229–237 are interaction with the sliding clamp; the sequence is EGLDFLFDA. Glutamate 344 provides a ligand contact to a divalent metal cation. Residues arginine 359 and lysine 365 each coordinate ATP.

The protein belongs to the ATP-dependent DNA ligase family. In terms of assembly, interacts with the sliding clamp. It depends on a divalent metal cation as a cofactor.

It catalyses the reaction ATP + (deoxyribonucleotide)n-3'-hydroxyl + 5'-phospho-(deoxyribonucleotide)m = (deoxyribonucleotide)n+m + AMP + diphosphate.. In terms of biological role, DNA ligase, which is expressed in the early stage of lytic development, has been implicated in T4 DNA synthesis and genetic recombination. It may also play a role in T4 DNA repair. The protein is DNA ligase (30) of Enterobacteria phage T4 (Bacteriophage T4).